The chain runs to 302 residues: Olfactory receptor 51H1 (302 aa).

The Extracellular portion of the chain corresponds to 1–27; the sequence is MTNLNASQANHRNFILTGIPGTPDKNP. Asn5 carries an N-linked (GlcNAc...) asparagine glycan. The chain crosses the membrane as a helical span at residues 28 to 48; the sequence is WLAFPLGFLYTLTLLGNGTIL. Over 49–56 the chain is Cytoplasmic; sequence AVIKVEPS. Residues 57-77 traverse the membrane as a helical segment; it reads LHEPTYYFLSILALTDVSLSM. Over 78 to 101 the chain is Extracellular; the sequence is STLPSMLSIYWFNAPQIVFDACIM. Cys99 and Cys191 are joined by a disulfide. A helical transmembrane segment spans residues 102–122; that stretch reads QMFFIHVFGIVESGVLVSMAF. Over 123-141 the chain is Cytoplasmic; it reads DRFVAIRNPLHYVSILTHD. A helical transmembrane segment spans residues 142 to 162; sequence VIRKTGIAVLTRAVCVVFPVP. At 163–198 the chain is on the extracellular side; the sequence is FLIKCLPFCHSNVLSHSYCLHQNMMRLACASTRINS. The chain crosses the membrane as a helical span at residues 199–219; that stretch reads LYGLIVVIFTLGLDVLLTLLS. Residues 220 to 239 lie on the Cytoplasmic side of the membrane; it reads YVLTLKTVLGIVSRGERLKT. Residues 240–260 traverse the membrane as a helical segment; the sequence is LSTCLSHMSTVLLFYVPFMGA. At 261-276 the chain is on the extracellular side; that stretch reads ASMIHRFWEHLSPVVH. The helical transmembrane segment at 277–297 threads the bilayer; that stretch reads MVMADIYLLLPPVLNPIVYSV. Topologically, residues 298-302 are cytoplasmic; the sequence is KTKQI.

Belongs to the G-protein coupled receptor 1 family.

It localises to the cell membrane. Odorant receptor. This Homo sapiens (Human) protein is Olfactory receptor 51H1 (OR51H1).